Reading from the N-terminus, the 688-residue chain is Complement C1s subcomponent (688 aa).

The first 15 residues, 1-15 (MWCIVLFSLLAWVYA), serve as a signal peptide directing secretion. A CUB 1 domain is found at 16-130 (EPTMYGEILS…TGFAAYYVAT (115 aa)). Ca(2+) is bound by residues glutamate 60, aspartate 68, aspartate 113, aspartate 131, isoleucine 132, and glutamate 134. The cysteines at positions 65 and 83 are disulfide-linked. Positions 131–172 (DINECTDFVDVPCSHFCNNFIGGYFCSCPPEYFLHDDMKNCG) constitute an EGF-like; calcium-binding domain. 3 cysteine pairs are disulfide-bonded: cysteine 135-cysteine 147, cysteine 143-cysteine 156, and cysteine 158-cysteine 171. Residues asparagine 149, phenylalanine 150, and glycine 153 each contribute to the Ca(2+) site. Asparagine 149 is subject to (3R)-3-hydroxyasparagine. A glycan (N-linked (GlcNAc...) asparagine) is linked at asparagine 174. A disulfide bond links cysteine 175 and cysteine 202. The region spanning 175 to 290 (CSGDVFTALI…KGWKLRYHGD (116 aa)) is the CUB 2 domain. Residues glutamate 226, aspartate 236, aspartate 275, glycine 278, and glutamine 279 each contribute to the Ca(2+) site. A disulfide bond links cysteine 234 and cysteine 251. 2 Sushi domains span residues 292–356 (MPCP…KCQP) and 357–423 (VDCG…KCVP). 7 disulfide bridges follow: cysteine 294-cysteine 341, cysteine 321-cysteine 354, cysteine 359-cysteine 403, cysteine 386-cysteine 421, cysteine 425-cysteine 549, cysteine 595-cysteine 618, and cysteine 628-cysteine 659. A glycan (N-linked (GlcNAc...) asparagine) is linked at asparagine 406. Residues 438–680 (IIGGSDADIK…YVDWIMKTMQ (243 aa)) form the Peptidase S1 domain. Residues histidine 475 and aspartate 529 each act as charge relay system in the active site. Serine 632 serves as the catalytic Charge relay system.

The protein belongs to the peptidase S1 family. Core component of the complement C1 complex, a calcium-dependent complex composed of 1 molecule of the C1Q subcomplex, 2 molecules of C1R and 2 molecules of C1S. The C1Q subcomplex is composed 18 subunits: 3 chains of C1QA, C1QB, and C1QC trimerize to form 6 collagen-like triple helices connected to six globular ligand-recognition modules. Cleaved and activated by C1R to generate Complement C1s subcomponent heavy and light chains. In terms of processing, the iron and 2-oxoglutarate dependent 3-hydroxylation of aspartate and asparagine is (R) stereospecific within EGF domains.

It is found in the secreted. Its subcellular location is the cell surface. It catalyses the reaction Cleavage of Arg-|-Ala bond in complement component C4 to form C4a and C4b, and Lys(or Arg)-|-Lys bond in complement component C2 to form C2a and C2b: the 'classical' pathway C3 convertase.. With respect to regulation, cleaved and activated by C1R. Immunoglobulin-binding promotes autoactivation of C1R, which results in the cleavage of the Arg-Ile bond in the catalytic domain. Inhibited by C1 inhibitor (SERPING1). Functionally, component of the complement C1 complex, a multiprotein complex that initiates the classical pathway of the complement system, a cascade of proteins that leads to phagocytosis and breakdown of pathogens and signaling that strengthens the adaptive immune system. C1S is activated following association of the C1 complex with immunoglobulins (IgG or IgM) complexed with antigens to form antigen-antibody complexes on the surface of pathogens. C1S is cleaved and activated by C1R to generate C1s subcomponent heavy and light chains. C1s subcomponent light chain then cleaves and activates C2 and C4, the next components of the classical complement pathway. In terms of biological role, serine protease component of the complement C1 complex, which catalyzes cleavage and activation of C2 and C4, the next components of the classical complement pathway. Also able to cleave C1 inhibitor (SERPING1) in vitro; additional evidence is however required to confirm this result in vivo. Also cleaves IGFBP5 and thereby inhibits the trophic effects of IGF1. The protein is Complement C1s subcomponent of Homo sapiens (Human).